The primary structure comprises 626 residues: Chaperone protein HtpG (626 aa).

The segment at 1 to 331 is a; substrate-binding; it reads MSETVERHEF…TDDLPLNVSR (331 aa). The interval 332–544 is b; that stretch reads EMLQSTPTLQ…GMGPDLQMQR (213 aa). The c stretch occupies residues 545 to 626; it reads LLRRAGRGFG…GTAAKPAGSA (82 aa).

This sequence belongs to the heat shock protein 90 family. As to quaternary structure, homodimer.

It is found in the cytoplasm. Its function is as follows. Molecular chaperone. Has ATPase activity. The sequence is that of Chaperone protein HtpG from Methylorubrum extorquens (strain CM4 / NCIMB 13688) (Methylobacterium extorquens).